Consider the following 503-residue polypeptide: Probable cytosol aminopeptidase (503 aa).

K274 and D279 together coordinate Mn(2+). The active site involves K286. Mn(2+)-binding residues include D297, D356, and E358. The active site involves R360.

Belongs to the peptidase M17 family. The cofactor is Mn(2+).

The protein localises to the cytoplasm. The catalysed reaction is Release of an N-terminal amino acid, Xaa-|-Yaa-, in which Xaa is preferably Leu, but may be other amino acids including Pro although not Arg or Lys, and Yaa may be Pro. Amino acid amides and methyl esters are also readily hydrolyzed, but rates on arylamides are exceedingly low.. It carries out the reaction Release of an N-terminal amino acid, preferentially leucine, but not glutamic or aspartic acids.. Functionally, presumably involved in the processing and regular turnover of intracellular proteins. Catalyzes the removal of unsubstituted N-terminal amino acids from various peptides. This is Probable cytosol aminopeptidase from Burkholderia pseudomallei (strain 1106a).